The chain runs to 70 residues: DNA-directed RNA polymerase subunit omega (70 aa).

The protein belongs to the RNA polymerase subunit omega family. The RNAP catalytic core consists of 2 alpha, 1 beta, 1 beta' and 1 omega subunit. When a sigma factor is associated with the core the holoenzyme is formed, which can initiate transcription.

The catalysed reaction is RNA(n) + a ribonucleoside 5'-triphosphate = RNA(n+1) + diphosphate. Promotes RNA polymerase assembly. Latches the N- and C-terminal regions of the beta' subunit thereby facilitating its interaction with the beta and alpha subunits. The polypeptide is DNA-directed RNA polymerase subunit omega (Bacillus cereus (strain B4264)).